A 447-amino-acid chain; its full sequence is Argininosuccinate synthase (447 aa).

ATP-binding positions include 17–25 (AFSGGLDTS) and alanine 43. An L-citrulline-binding site is contributed by tyrosine 99. The ATP site is built by glycine 129 and threonine 131. Threonine 131, asparagine 135, and aspartate 136 together coordinate L-aspartate. Asparagine 135 is a binding site for L-citrulline. Aspartate 136 contributes to the ATP binding site. Positions 139 and 192 each coordinate L-citrulline. Aspartate 194 lines the ATP pocket. L-citrulline-binding residues include threonine 201, glutamate 203, and glutamate 280.

Belongs to the argininosuccinate synthase family. Type 2 subfamily. Homotetramer.

The protein resides in the cytoplasm. It catalyses the reaction L-citrulline + L-aspartate + ATP = 2-(N(omega)-L-arginino)succinate + AMP + diphosphate + H(+). Its pathway is amino-acid biosynthesis; L-arginine biosynthesis; L-arginine from L-ornithine and carbamoyl phosphate: step 2/3. This chain is Argininosuccinate synthase, found in Salmonella newport (strain SL254).